A 354-amino-acid polypeptide reads, in one-letter code: Probable L-ascorbate-6-phosphate lactonase UlaG (354 aa).

The protein belongs to the UlaG family. The cofactor is a divalent metal cation.

It is found in the cytoplasm. It catalyses the reaction L-ascorbate 6-phosphate + H2O = 3-dehydro-L-gulonate 6-phosphate. It functions in the pathway cofactor degradation; L-ascorbate degradation; D-xylulose 5-phosphate from L-ascorbate: step 1/4. Functionally, probably catalyzes the hydrolysis of L-ascorbate-6-P into 3-keto-L-gulonate-6-P. Is essential for L-ascorbate utilization under anaerobic conditions. This is Probable L-ascorbate-6-phosphate lactonase UlaG from Salmonella agona (strain SL483).